The following is a 156-amino-acid chain: Small ribosomal subunit protein uS7 (156 aa).

Belongs to the universal ribosomal protein uS7 family. Part of the 30S ribosomal subunit. Contacts proteins S9 and S11.

Its function is as follows. One of the primary rRNA binding proteins, it binds directly to 16S rRNA where it nucleates assembly of the head domain of the 30S subunit. Is located at the subunit interface close to the decoding center, probably blocks exit of the E-site tRNA. This is Small ribosomal subunit protein uS7 from Shewanella sediminis (strain HAW-EB3).